A 651-amino-acid chain; its full sequence is MAAHVEQLEFQAEARQLLDLMIHSVYSNKDSFLRELVSNASDALDKLRLESFRNKDLDVDTSDLHIEIDVDKEARTLTVRDNGIGMTRDEVVSLIGTLAKSGTGELRQQLREAKDKDTSEELIGQFGIGFYASFMVADRVELLTRKAGESEATRWESSGEGTYTIETVDQAGGEVPQGTSVTLHLKPEDREDELHDYTSEWKIRELVKQYSDFIAWPIRMEVERRTPAPEDGGEESVTVETETLNSMKALWARPRDEVSDEEYTEFYKHVAHAWDEPLEVIAMKAEGTFEYQALLFIPSHAPFDLFNQNAAVGVQLYVKRVFIMGDCDQLMPPYLRFVKGVVDAQDMSLNVSREILQQDRQIRAIRRRLTKKVLSTITEMQTERPEKYRTFWTQFGRVLKEGLLTDIENQETLLRVCSFASTHSEDEPTTLAEYVERMPDGQSQIFYAAGESRQQLLHSPHLEAFKAKGYEVLLLTDPVDEVWVESVHEFDGKPLQSVAKGEVDLDSDADNDGQDAERQEREQGFADLIAWLKEALSDHVKEVRLSTRLTDSPACLITDTFGITPALARMYRASGQPVPVEKRILELNPNHPLITGLREAHKSRGADAELVGTAELLYGTALLAEGGVLEDPARFAGLLADRLTRTVGDQT.

The tract at residues 1–353 (MAAHVEQLEF…AQDMSLNVSR (353 aa)) is a; substrate-binding. Positions 354–569 (EILQQDRQIR…TFGITPALAR (216 aa)) are b. Positions 570 to 651 (MYRASGQPVP…RLTRTVGDQT (82 aa)) are c.

The protein belongs to the heat shock protein 90 family. In terms of assembly, homodimer.

It localises to the cytoplasm. Its function is as follows. Molecular chaperone. Has ATPase activity. The protein is Chaperone protein HtpG of Mycolicibacterium vanbaalenii (strain DSM 7251 / JCM 13017 / BCRC 16820 / KCTC 9966 / NRRL B-24157 / PYR-1) (Mycobacterium vanbaalenii).